Here is a 214-residue protein sequence, read N- to C-terminus: Large ribosomal subunit protein eL14 (214 aa).

At Lys-79 the chain carries N6-acetyllysine. Lys-85 bears the N6-acetyllysine; alternate mark. The residue at position 85 (Lys-85) is an N6-succinyllysine; alternate. Lys-124 is covalently cross-linked (Glycyl lysine isopeptide (Lys-Gly) (interchain with G-Cter in SUMO2)). Ser-139 carries the post-translational modification Phosphoserine. The disordered stretch occupies residues 161–214 (PAKKITTEGKKAPAQKAPAQKAAGQKAAPPPKTQKGQKAPSQKAPAPKASGKKA). Residues 170 to 174 (KKAPA) form a 1-1; approximate repeat. Positions 170–189 (KKAPAQKAPAQKAAGQKAAP) are 4 X 5 AA tandem repeats of Q-K-A-[APS]-X. The segment covering 172–214 (APAQKAPAQKAAGQKAAPPPKTQKGQKAPSQKAPAPKASGKKA) has biased composition (low complexity). A run of 5 repeats spans residues 175 to 179 (QKAPA), 180 to 184 (QKAAG), 185 to 189 (QKAAP), 192 to 194 (KTQ), and 195 to 197 (KGQ). The interval 192–197 (KTQKGQ) is 2 X 3 AA tandem repeats of K-G-Q. An N6-succinyllysine modification is found at Lys-203.

This sequence belongs to the eukaryotic ribosomal protein eL14 family. In terms of assembly, component of the large ribosomal subunit.

The protein localises to the cytoplasm. Functionally, component of the large ribosomal subunit. The ribosome is a large ribonucleoprotein complex responsible for the synthesis of proteins in the cell. In Bos taurus (Bovine), this protein is Large ribosomal subunit protein eL14 (RPL14).